We begin with the raw amino-acid sequence, 209 residues long: Large ribosomal subunit protein uL3 (209 aa).

A compositionally biased stretch (polar residues) spans 112-122; sequence GTTRGHGTQGN. Residues 112-146 are disordered; sequence GTTRGHGTQGNIKRWGQSRGPETHGSRYHRIPGSM.

This sequence belongs to the universal ribosomal protein uL3 family. As to quaternary structure, part of the 50S ribosomal subunit. Forms a cluster with proteins L14 and L19.

In terms of biological role, one of the primary rRNA binding proteins, it binds directly near the 3'-end of the 23S rRNA, where it nucleates assembly of the 50S subunit. In Lactobacillus gasseri (strain ATCC 33323 / DSM 20243 / BCRC 14619 / CIP 102991 / JCM 1131 / KCTC 3163 / NCIMB 11718 / NCTC 13722 / AM63), this protein is Large ribosomal subunit protein uL3.